Consider the following 314-residue polypeptide: tRNA dimethylallyltransferase (314 aa).

Residue 12–19 (GPTASGKT) coordinates ATP. Position 14–19 (14–19 (TASGKT)) interacts with substrate. Interaction with substrate tRNA regions lie at residues 37-40 (DSAL), 161-165 (QRIQR), and 244-249 (RCVGYR).

This sequence belongs to the IPP transferase family. Monomer. It depends on Mg(2+) as a cofactor.

The catalysed reaction is adenosine(37) in tRNA + dimethylallyl diphosphate = N(6)-dimethylallyladenosine(37) in tRNA + diphosphate. Functionally, catalyzes the transfer of a dimethylallyl group onto the adenine at position 37 in tRNAs that read codons beginning with uridine, leading to the formation of N6-(dimethylallyl)adenosine (i(6)A). In Janthinobacterium sp. (strain Marseille) (Minibacterium massiliensis), this protein is tRNA dimethylallyltransferase.